The following is a 424-amino-acid chain: Serine--tRNA ligase (424 aa).

Residue 233–235 (TAE) coordinates L-serine. 264-266 (RRE) lines the ATP pocket. Glu287 is a binding site for L-serine. 351–354 (EISS) provides a ligand contact to ATP. Position 387 (Ser387) interacts with L-serine.

This sequence belongs to the class-II aminoacyl-tRNA synthetase family. Type-1 seryl-tRNA synthetase subfamily. Homodimer. The tRNA molecule binds across the dimer.

The protein resides in the cytoplasm. It catalyses the reaction tRNA(Ser) + L-serine + ATP = L-seryl-tRNA(Ser) + AMP + diphosphate + H(+). It carries out the reaction tRNA(Sec) + L-serine + ATP = L-seryl-tRNA(Sec) + AMP + diphosphate + H(+). It functions in the pathway aminoacyl-tRNA biosynthesis; selenocysteinyl-tRNA(Sec) biosynthesis; L-seryl-tRNA(Sec) from L-serine and tRNA(Sec): step 1/1. Functionally, catalyzes the attachment of serine to tRNA(Ser). Is also able to aminoacylate tRNA(Sec) with serine, to form the misacylated tRNA L-seryl-tRNA(Sec), which will be further converted into selenocysteinyl-tRNA(Sec). This is Serine--tRNA ligase from Cyanothece sp. (strain PCC 7425 / ATCC 29141).